The sequence spans 392 residues: Heat-inducible transcription repressor HrcA (392 aa).

The protein belongs to the HrcA family.

In terms of biological role, negative regulator of class I heat shock genes (grpE-dnaK-dnaJ and groELS operons). Prevents heat-shock induction of these operons. The chain is Heat-inducible transcription repressor HrcA from Chlamydia muridarum (strain MoPn / Nigg).